The chain runs to 157 residues: ATP synthase subunit b' (157 aa).

A helical transmembrane segment spans residues 22–42 (ATLPLIAIQFLLLVAVLNSLF).

Belongs to the ATPase B chain family. In terms of assembly, F-type ATPases have 2 components, F(1) - the catalytic core - and F(0) - the membrane proton channel. F(1) has five subunits: alpha(3), beta(3), gamma(1), delta(1), epsilon(1). F(0) has four main subunits: a(1), b(1), b'(1) and c(10-14). The alpha and beta chains form an alternating ring which encloses part of the gamma chain. F(1) is attached to F(0) by a central stalk formed by the gamma and epsilon chains, while a peripheral stalk is formed by the delta, b and b' chains.

It localises to the cellular thylakoid membrane. In terms of biological role, f(1)F(0) ATP synthase produces ATP from ADP in the presence of a proton or sodium gradient. F-type ATPases consist of two structural domains, F(1) containing the extramembraneous catalytic core and F(0) containing the membrane proton channel, linked together by a central stalk and a peripheral stalk. During catalysis, ATP synthesis in the catalytic domain of F(1) is coupled via a rotary mechanism of the central stalk subunits to proton translocation. Component of the F(0) channel, it forms part of the peripheral stalk, linking F(1) to F(0). The b'-subunit is a diverged and duplicated form of b found in plants and photosynthetic bacteria. The sequence is that of ATP synthase subunit b' from Synechococcus sp. (strain JA-2-3B'a(2-13)) (Cyanobacteria bacterium Yellowstone B-Prime).